The following is a 157-amino-acid chain: Aspartate carbamoyltransferase regulatory chain (157 aa).

Cys-108, Cys-113, Cys-138, and Cys-141 together coordinate Zn(2+).

This sequence belongs to the PyrI family. Contains catalytic and regulatory chains. It depends on Zn(2+) as a cofactor.

Functionally, involved in allosteric regulation of aspartate carbamoyltransferase. The protein is Aspartate carbamoyltransferase regulatory chain of Ignicoccus hospitalis (strain KIN4/I / DSM 18386 / JCM 14125).